The following is a 636-amino-acid chain: DNA mismatch repair protein MutL (636 aa).

A compositionally biased stretch (basic and acidic residues) spans 332 to 344; the sequence is HAGEQGDSLRTDI. Disordered stretches follow at residues 332 to 360 and 417 to 443; these read HAGE…PADN and ASAP…SDDA. Residues 417–437 are compositionally biased toward low complexity; it reads ASAPADAAPAQASEPAAAPQA.

Belongs to the DNA mismatch repair MutL/HexB family.

This protein is involved in the repair of mismatches in DNA. It is required for dam-dependent methyl-directed DNA mismatch repair. May act as a 'molecular matchmaker', a protein that promotes the formation of a stable complex between two or more DNA-binding proteins in an ATP-dependent manner without itself being part of a final effector complex. The sequence is that of DNA mismatch repair protein MutL from Ralstonia nicotianae (strain ATCC BAA-1114 / GMI1000) (Ralstonia solanacearum).